A 447-amino-acid polypeptide reads, in one-letter code: Tubulin beta chain (447 aa).

Residues Gln11, Glu69, Ser138, Gly142, Thr143, Gly144, Asn204, and Asn226 each coordinate GTP. Mg(2+) is bound at residue Glu69. Residues 421–447 (EYQQYQDASISEGEEEYEEEAPMEPEE) are disordered. Acidic residues predominate over residues 432–447 (EGEEEYEEEAPMEPEE).

The protein belongs to the tubulin family. In terms of assembly, dimer of alpha and beta chains. A typical microtubule is a hollow water-filled tube with an outer diameter of 25 nm and an inner diameter of 15 nM. Alpha-beta heterodimers associate head-to-tail to form protofilaments running lengthwise along the microtubule wall with the beta-tubulin subunit facing the microtubule plus end conferring a structural polarity. Microtubules usually have 13 protofilaments but different protofilament numbers can be found in some organisms and specialized cells. Mg(2+) is required as a cofactor.

Its subcellular location is the cytoplasm. The protein resides in the cytoskeleton. Its function is as follows. Tubulin is the major constituent of microtubules, a cylinder consisting of laterally associated linear protofilaments composed of alpha- and beta-tubulin heterodimers. Microtubules grow by the addition of GTP-tubulin dimers to the microtubule end, where a stabilizing cap forms. Below the cap, tubulin dimers are in GDP-bound state, owing to GTPase activity of alpha-tubulin. This is Tubulin beta chain from Rhynchosporium secalis (Barley scald fungus).